The chain runs to 132 residues: ATP synthase epsilon chain, chloroplastic (132 aa).

The protein belongs to the ATPase epsilon chain family. As to quaternary structure, F-type ATPases have 2 components, CF(1) - the catalytic core - and CF(0) - the membrane proton channel. CF(1) has five subunits: alpha(3), beta(3), gamma(1), delta(1), epsilon(1). CF(0) has three main subunits: a, b and c.

It is found in the plastid. The protein resides in the chloroplast thylakoid membrane. Functionally, produces ATP from ADP in the presence of a proton gradient across the membrane. This Pylaiella littoralis (Seaweed) protein is ATP synthase epsilon chain, chloroplastic.